Reading from the N-terminus, the 260-residue chain is PYMRYIEAKLHEVLPSRFYIHSGKGLEELNEWVIKGKFEGICTESDYEAFDASQDQYIVAFELALMEYLGLPRDLIEDYAFIKCHLGSKLGNFAIMRFSGEASTFLFNTMANMLFTFLRYNIKDSEHICFAGDDMCASERLCIKKEHEGFLNKLKLKAKVFFVDKPTFCGWHLCPDGIYKKPQLVLERMCIAKEKNNLANCLDNYAIEVSYAYKLGERAVNRMDEEELEAAYNCVRIIIKNKKLLKSDILGFYSNIEKQI.

A RdRp catalytic domain is found at 40 to 147; it reads GICTESDYEA…SERLCIKKEH (108 aa).

Belongs to the potexviruses/carlaviruses RNA replication protein family.

It carries out the reaction RNA(n) + a ribonucleoside 5'-triphosphate = RNA(n+1) + diphosphate. The enzyme catalyses ATP + H2O = ADP + phosphate + H(+). Its function is as follows. RNA replication. The central part of this protein possibly functions as an ATP-binding helicase. The protein is RNA replication protein of Chrysanthemum morifolium (Florist's daisy).